The chain runs to 267 residues: Neuferricin (267 aa).

The N-terminal stretch at 1 to 17 is a signal peptide; the sequence is MLKYLVALISMVLAVWT. A Cytochrome b5 heme-binding domain is found at 53–150; sequence LLTKEQLSLY…RDYTPVGKLI (98 aa).

Belongs to the cytochrome b5 family. MAPR subfamily.

The protein localises to the secreted. In terms of biological role, heme-binding protein which promotes neuronal but not astrocyte differentiation. The sequence is that of Neuferricin (cyb5d2) from Danio rerio (Zebrafish).